The sequence spans 193 residues: MAKKQSILSPIIRITFTFLVLCGLVYPLIVTGIAQAVMKDNADGSLIYNDKNEVIGSKLIGQNFTDPRYFHGRVSSIEYKAEASGSNNYAPSNPDLEKRVEKSIEEWKKQNPSVPVTEVPIDLVTNSGSGLDPDISPKAASVQVERISKLTNIPKETLDQLIKDQTEGAALGLFGETRVNVLKLNLGLQKIMK.

Residues 14–34 (ITFTFLVLCGLVYPLIVTGIA) form a helical membrane-spanning segment.

The protein belongs to the KdpC family. As to quaternary structure, the system is composed of three essential subunits: KdpA, KdpB and KdpC.

It localises to the cell membrane. In terms of biological role, part of the high-affinity ATP-driven potassium transport (or Kdp) system, which catalyzes the hydrolysis of ATP coupled with the electrogenic transport of potassium into the cytoplasm. This subunit acts as a catalytic chaperone that increases the ATP-binding affinity of the ATP-hydrolyzing subunit KdpB by the formation of a transient KdpB/KdpC/ATP ternary complex. The polypeptide is Potassium-transporting ATPase KdpC subunit (Bacillus anthracis (strain A0248)).